We begin with the raw amino-acid sequence, 297 residues long: Ribosomal RNA small subunit methyltransferase H (297 aa).

Residues 35–37 (GGH), aspartate 55, phenylalanine 82, aspartate 100, and glutamine 107 contribute to the S-adenosyl-L-methionine site.

The protein belongs to the methyltransferase superfamily. RsmH family.

The protein localises to the cytoplasm. It catalyses the reaction cytidine(1402) in 16S rRNA + S-adenosyl-L-methionine = N(4)-methylcytidine(1402) in 16S rRNA + S-adenosyl-L-homocysteine + H(+). In terms of biological role, specifically methylates the N4 position of cytidine in position 1402 (C1402) of 16S rRNA. The polypeptide is Ribosomal RNA small subunit methyltransferase H (Chlamydia caviae (strain ATCC VR-813 / DSM 19441 / 03DC25 / GPIC) (Chlamydophila caviae)).